The following is a 341-amino-acid chain: uncharacterized protein (341 aa).

The span at 1-12 (NSRIAHVPKSKK) shows a compositional bias: basic residues. Disordered regions lie at residues 1–21 (NSRI…SPRF) and 291–317 (KARM…NPED). Polar residues predominate over residues 297 to 312 (SGKNYQQRPSRTTSPA).

This is an uncharacterized protein from Lachancea kluyveri (strain ATCC 58438 / CBS 3082 / BCRC 21498 / NBRC 1685 / JCM 7257 / NCYC 543 / NRRL Y-12651) (Yeast).